A 62-amino-acid polypeptide reads, in one-letter code: UPF0339 protein Atu5359 (62 aa).

The protein belongs to the UPF0339 family.

This is UPF0339 protein Atu5359 from Agrobacterium fabrum (strain C58 / ATCC 33970) (Agrobacterium tumefaciens (strain C58)).